The primary structure comprises 84 residues: Putative membrane protein insertion efficiency factor (84 aa).

It belongs to the UPF0161 family.

The protein resides in the cell inner membrane. Its function is as follows. Could be involved in insertion of integral membrane proteins into the membrane. The chain is Putative membrane protein insertion efficiency factor from Shewanella loihica (strain ATCC BAA-1088 / PV-4).